The chain runs to 496 residues: Probable glycine dehydrogenase (decarboxylating) subunit 2 (496 aa).

At K265 the chain carries N6-(pyridoxal phosphate)lysine.

It belongs to the GcvP family. C-terminal subunit subfamily. In terms of assembly, the glycine cleavage system is composed of four proteins: P, T, L and H. In this organism, the P 'protein' is a heterodimer of two subunits. Requires pyridoxal 5'-phosphate as cofactor.

The enzyme catalyses N(6)-[(R)-lipoyl]-L-lysyl-[glycine-cleavage complex H protein] + glycine + H(+) = N(6)-[(R)-S(8)-aminomethyldihydrolipoyl]-L-lysyl-[glycine-cleavage complex H protein] + CO2. Functionally, the glycine cleavage system catalyzes the degradation of glycine. The P protein binds the alpha-amino group of glycine through its pyridoxal phosphate cofactor; CO(2) is released and the remaining methylamine moiety is then transferred to the lipoamide cofactor of the H protein. This is Probable glycine dehydrogenase (decarboxylating) subunit 2 from Thioalkalivibrio sulfidiphilus (strain HL-EbGR7).